The primary structure comprises 506 residues: MSSHPYVTQQNTPLADDTTLMSTTDLQSYITHANDTFVQVSGYTLQELQGQPHNMVRHPDMPKAAFADMWFTLKKGEPWSGIVKNRRKNGDHYWVRANAVPMVREGKISGYMSIRTRATDEEIAAVEPLYKALNAGRTSKRIHKGLVVRKGWLGKLPSLPLRWRARGVMTLMFILLAAMLWFVAAPVVTYILCALVVLLASACFEWQIVRPIENVAHQALKVATGERNSVEHLNRSDELGLTLRAVGQLGLMCRWLINDVSSQVSSVRNGSETLAKGTDELNEHTQQTVDNVQQTVATMNQMAASVKQNSATASAADKLSITASNAAVQGGEAMTTVIKTMDDIADSTQRIGTITSLINDIAFQTNILALNAAVEAARAGEQGKGFAVVAGEVRHLASRSANAANDIRKLIDASADKVQSGSQQVHAAGRTMEDIVAQVKNVTQLIAQISHSTLEQADGLSSLTRAVDELNLITQKNAELVEESAQVSAMVKHRASRLEDAVTVLH.

At 1–166 (MSSHPYVTQQ…PSLPLRWRAR (166 aa)) the chain is on the cytoplasmic side. A helical transmembrane segment spans residues 167-186 (GVMTLMFILLAAMLWFVAAP). Residues 187–190 (VVTY) are Periplasmic-facing. The chain crosses the membrane as a helical span at residues 191-209 (ILCALVVLLASACFEWQIV). The Cytoplasmic segment spans residues 210–506 (RPIENVAHQA…RLEDAVTVLH (297 aa)). One can recognise a Methyl-accepting transducer domain in the interval 263–492 (QVSSVRNGSE…ESAQVSAMVK (230 aa)).

The protein belongs to the methyl-accepting chemotaxis (MCP) protein family.

It is found in the cell inner membrane. In terms of biological role, signal transducer for aerotaxis. The aerotactic response is the accumulation of cells around air bubbles. The nature of the sensory stimulus detected by this protein is the proton motive force or cellular redox state. It uses a FAD prosthetic group as a redox sensor to monitor oxygen levels. This Escherichia coli (strain K12) protein is Aerotaxis receptor (aer).